Reading from the N-terminus, the 77-residue chain is Putative defensin-like protein 160 (77 aa).

Positions methionine 1–cysteine 24 are cleaved as a signal peptide. Disulfide bonds link cysteine 30–cysteine 77, cysteine 40–cysteine 59, cysteine 45–cysteine 71, and cysteine 49–cysteine 73.

The protein belongs to the DEFL family.

It is found in the secreted. The polypeptide is Putative defensin-like protein 160 (LCR26) (Arabidopsis thaliana (Mouse-ear cress)).